Reading from the N-terminus, the 1202-residue chain is Ribonuclease P protein component, mitochondrial (1202 aa).

The N-terminal 122 residues, 1–122, are a transit peptide targeting the mitochondrion; the sequence is MAFKSFIYSK…NNNNNQHRYY (122 aa). Residues 109–134 are disordered; that stretch reads NYVNNNNNNQHRYYSTGPTLPTNQYD. The segment covering 118–134 has biased composition (polar residues); the sequence is QHRYYSTGPTLPTNQYD.

Consists of an RNA moiety (RPM1) and the protein component (RPM2). Both are necessary for full enzymatic activity.

The protein localises to the mitochondrion. The catalysed reaction is Endonucleolytic cleavage of RNA, removing 5'-extranucleotides from tRNA precursor.. Functionally, ribonuclease P generates mature tRNA molecules by cleaving their 5'-ends. In Saccharomyces cerevisiae (strain ATCC 204508 / S288c) (Baker's yeast), this protein is Ribonuclease P protein component, mitochondrial (RPM2).